We begin with the raw amino-acid sequence, 348 residues long: Bombesin receptor-activated protein C6orf89 homolog (348 aa).

Topologically, residues 1–58 are cytoplasmic; sequence MDLAANEISIYDKLSETVDLVRQTGHQCGMSEKAIEKFIRQLLEKNEPQRGPPQYPLL. The helical transmembrane segment at 59 to 79 threads the bilayer; it reads IAVYKVLLTLGLILFTAYFVI. At 80–348 the chain is on the extracellular side; it reads QPFSSLAPEP…ICDGTTLSDL (269 aa).

As to quaternary structure, homodimer. Interacts with BRS3. Interacts (via N-terminus) with SIN3B. Post-translationally, glycosylated.

The protein resides in the golgi apparatus membrane. It localises to the cytoplasm. Functionally, exhibits histone deacetylase (HDAC) enhancer properties. May play a role in cell cycle progression and wound repair of bronchial epithelial cells. In Mus musculus (Mouse), this protein is Bombesin receptor-activated protein C6orf89 homolog.